A 122-amino-acid polypeptide reads, in one-letter code: Large ribosomal subunit protein uL14c (122 aa).

This sequence belongs to the universal ribosomal protein uL14 family. Part of the 50S ribosomal subunit.

It localises to the plastid. Its subcellular location is the chloroplast. Its function is as follows. Binds to 23S rRNA. The protein is Large ribosomal subunit protein uL14c of Anthoceros angustus (Hornwort).